A 481-amino-acid polypeptide reads, in one-letter code: Protein FIZZY-RELATED 3 (481 aa).

The tract at residues 100–165 (PAGGQGSASS…RKVPKTPHKV (66 aa)) is disordered. Low complexity predominate over residues 125 to 136 (SNSSPSSPFSPS). Basic residues predominate over residues 154–163 (PPRKVPKTPH). 7 WD repeats span residues 172–209 (QDDFYLNVVDWSSQNVLAVGLGTCVYLWTASNSKVTKL), 213–252 (GPNDSVCSVQWTREGSYISIGTSHGQVQVWDGTQCKRVRT), 255–292 (GHQTRTGVLAWNSRILSSGSRDRNILQHDIRVQSDFVS), 296–335 (GHKSEVCGLKWSHDDRELASGGNDNQLLVWNNHSQQPILK), 338–380 (EHTA…QLNS), 382–423 (DTGS…KVAT), and 426–465 (GHSMRVLYLATSPDGQTIVTGAGDETLRFWNVFPSVKMQT).

The protein belongs to the WD repeat CDC20/Fizzy family. As to quaternary structure, associates with the APC/C complex. Interacts with CDC20-1, CDC20-2, CYCA1-1, CYCA3-4, CYCB1-1 and CYCB1-2. Binds to GIG1 and PYM.

It functions in the pathway protein modification; protein ubiquitination. In terms of biological role, activator protein that regulates the ubiquitin ligase activity and substrate specificity of the anaphase promoting complex/cyclosome (APC/C). This is Protein FIZZY-RELATED 3 (FZR3) from Arabidopsis thaliana (Mouse-ear cress).